Here is a 135-residue protein sequence, read N- to C-terminus: Congerin-1 (135 aa).

Ser1 carries the post-translational modification N-acetylserine. The Galectin domain occupies 3 to 135; that stretch reads GLQVKNFDFT…GDARLTLVKE (133 aa). 70–76 is a binding site for a beta-D-galactoside; the sequence is WETEQRS.

In terms of assembly, homodimer.

This protein binds beta-galactoside. Its physiological function is not yet known. This is Congerin-1 from Conger myriaster (Conger eel).